The chain runs to 399 residues: Transcription factor UNE10 (399 aa).

Disordered regions lie at residues 119–158 (QSKP…GSQR) and 173–228 (MGSH…RRDK). The segment covering 178–201 (NTIDDHDSVCHSRPQMEDEEEKKA) has biased composition (basic and acidic residues). Residues 213 to 262 (RAAAIHNQSERKRRDKINQRMKTLQKLVPNSSKTDKASMLDEVIEYLKQL) form the bHLH domain.

As to quaternary structure, homodimer. Associates to PTAC12/HMR/PAP5 which acts as a transcriptional coactivator. Interacts with the Pfr form of phyB but barely with that of phyA. Binds to COP1. Ubiquitinated and subsequently targeted to protein degradation by COP1 in the dark, but not in far-red light. As to expression, mainly expressed in stems, leaves, seedlings, fruits and flowers, and, to a lower extent, in roots.

It is found in the nucleus. With respect to regulation, stabilized by phyA but destabilized by phyB. Accumulates in the dark but not in far-red light upon MG132 treatment, a 26S proteasome inhibitor (at protein level). In terms of biological role, transcription factor binding to G-box elements (5'-CACGTG-3') in target genes promoters, particularly in far-red light but barely in the dark. Required during the fertilization of ovules by pollen. Repressor of phytochrome A-mediated far-red light responses including seed germination, suppression of hypocotyl elongation, and randomization of hypocotyl growth orientation. Does not inhibit phyB-induced red light responses. The polypeptide is Transcription factor UNE10 (Arabidopsis thaliana (Mouse-ear cress)).